Consider the following 561-residue polypeptide: DNA ligase (561 aa).

Glu253 is an ATP binding site. Residue Lys255 is the N6-AMP-lysine intermediate of the active site. ATP is bound by residues Arg260, Arg275, Glu304, Phe344, Arg421, and Lys427.

It belongs to the ATP-dependent DNA ligase family. It depends on Mg(2+) as a cofactor.

It carries out the reaction ATP + (deoxyribonucleotide)n-3'-hydroxyl + 5'-phospho-(deoxyribonucleotide)m = (deoxyribonucleotide)n+m + AMP + diphosphate.. In terms of biological role, DNA ligase that seals nicks in double-stranded DNA during DNA replication, DNA recombination and DNA repair. The polypeptide is DNA ligase (Halobacterium salinarum (strain ATCC 29341 / DSM 671 / R1)).